Reading from the N-terminus, the 150-residue chain is MVLCFPLLLLLLVLWGPVCPLHAWPKRLTKAHWFEIQHIQPSPLQCNRAMSGINNYAQHCKHQNTFLHDSFQNVAAVCDLLSIVCKNRRHNCHQSSKPVNMTDCRLTSGKYPQCRYSAAAQYKFFIVACDPPQKSDPPYKLVPVHLDSIL.

A signal peptide spans 1–23; that stretch reads MVLCFPLLLLLLVLWGPVCPLHA. His-38 acts as the Proton acceptor in catalysis. Intrachain disulfides connect Cys-46–Cys-104, Cys-60–Cys-114, Cys-78–Cys-129, and Cys-85–Cys-92. Residues 61–65 and Lys-86 contribute to the substrate site; that span reads KHQNT. N-linked (GlcNAc...) asparagine glycosylation occurs at Asn-100. Arg-105 serves as a coordination point for substrate. Catalysis depends on His-145, which acts as the Proton donor.

Belongs to the pancreatic ribonuclease family. As to quaternary structure, interacts (via N-terminus) with bacterial lipopolysaccharide (LPS).

Its subcellular location is the secreted. It localises to the lysosome. It is found in the cytoplasmic granule. In terms of biological role, ribonuclease which shows a preference for the pyrimidines uridine and cytosine. Has potent antibacterial activity against a range of Gram-positive and Gram-negative bacteria, including P.aeruginosa, A.baumanii, M.luteus, S.aureus, E.faecalis, E.faecium, S.saprophyticus and E.coli. Causes loss of bacterial membrane integrity, and also promotes agglutination of Gram-negative bacteria. Probably contributes to urinary tract sterility. Bactericidal activity is independent of RNase activity. This Pan troglodytes (Chimpanzee) protein is Ribonuclease K6 (RNASE6).